A 1081-amino-acid polypeptide reads, in one-letter code: Zinc finger protein 827 (1081 aa).

Residues 1 to 10 (MPRRKQEQPK) are compositionally biased toward basic and acidic residues. A mediates direct interaction with RBBP4 region spans residues 1–14 (MPRRKQEQPKRLPS). The interval 1–77 (MPRRKQEQPK…DTSLGSTTPS (77 aa)) is disordered. The short motif at 3–5 (RRK) is the RRK motif; mediates NuRD recruitment to telomeres element. Positions 62-77 (EQSTSPDTSLGSTTPS) are enriched in polar residues. Residues Lys-176, Lys-216, and Lys-226 each participate in a glycyl lysine isopeptide (Lys-Gly) (interchain with G-Cter in SUMO2) cross-link. 2 disordered regions span residues 258 to 280 (KKVS…SFLS) and 305 to 348 (EKSS…SLEL). Over residues 327 to 344 (VSPPPPPPPPPPPPPPPQ) the composition is skewed to pro residues. Glycyl lysine isopeptide (Lys-Gly) (interchain with G-Cter in SUMO2) cross-links involve residues Lys-360 and Lys-372. 3 consecutive C2H2-type zinc fingers follow at residues 374–396 (FQCP…MVIH), 402–424 (HQCP…MKVH), and 433–455 (FQCQ…MRCH). Glycyl lysine isopeptide (Lys-Gly) (interchain with G-Cter in SUMO2) cross-links involve residues Lys-466, Lys-475, Lys-523, Lys-549, Lys-580, Lys-587, and Lys-597. Residues 525–553 (EPKEDNGLPTSFTLNTADRPANHTKLKDP) are disordered. A compositionally biased stretch (polar residues) spans 616 to 627 (VFSPESEVSTPG). Positions 616–640 (VFSPESEVSTPGVSEDALKPQEGKG) are disordered. Positions 631–640 (DALKPQEGKG) are enriched in basic and acidic residues. Residues Lys-634, Lys-639, and Lys-658 each participate in a glycyl lysine isopeptide (Lys-Gly) (interchain with G-Cter in SUMO2) cross-link. Lys-673 is covalently cross-linked (Glycyl lysine isopeptide (Lys-Gly) (interchain with G-Cter in SUMO1); alternate). Residue Lys-673 forms a Glycyl lysine isopeptide (Lys-Gly) (interchain with G-Cter in SUMO2); alternate linkage. Residues Lys-704, Lys-710, Lys-742, Lys-778, and Lys-798 each participate in a glycyl lysine isopeptide (Lys-Gly) (interchain with G-Cter in SUMO2) cross-link. 2 C2H2-type zinc fingers span residues 817 to 839 (FPCD…LSLH) and 845 to 867 (YKCH…LTVH). Residues Lys-870 and Lys-891 each participate in a glycyl lysine isopeptide (Lys-Gly) (interchain with G-Cter in SUMO2) cross-link. C2H2-type zinc fingers lie at residues 897 to 919 (YSCH…MSLH) and 929 to 952 (ICCT…GTKH). Residues 947 to 960 (HIGTKHTGEDRKTP) are compositionally biased toward basic and acidic residues. The interval 947 to 1013 (HIGTKHTGED…GSQPSLNSEE (67 aa)) is disordered. Lys-958 is covalently cross-linked (Glycyl lysine isopeptide (Lys-Gly) (interchain with G-Cter in SUMO2)). Over residues 961–978 (SESNSPSSSSLSALSDSA) the composition is skewed to low complexity. The segment covering 979-988 (NSKDDSDGSQ) has biased composition (basic and acidic residues). Residue Lys-1014 forms a Glycyl lysine isopeptide (Lys-Gly) (interchain with G-Cter in SUMO2) linkage. 2 consecutive C2H2-type zinc fingers follow at residues 1019–1041 (FECV…LQIH) and 1047–1069 (FECD…KKCH).

The protein belongs to the krueppel C2H2-type zinc-finger protein family. Part of a transcription inhibitory ribonucleoprotein complex composed at least of the circular RNA circZNF827, HNRNPK and HNRNPL. Interacts with the nucleosome remodeling and histone deacetylase/NuRD complex. Interacts with RBBP4; the interaction is direct and recruits RBBP4, a component of the NuRD complex, to telomeres.

It is found in the nucleus. The protein localises to the chromosome. The protein resides in the telomere. In terms of biological role, as part of a ribonucleoprotein complex composed at least of HNRNPK, HNRNPL and the circular RNA circZNF827 that nucleates the complex on chromatin, may negatively regulate the transcription of genes involved in neuronal differentiation. Could also recruit the nucleosome remodeling and histone deacetylase/NuRD complex to telomeric regions of chromosomes to regulate chromatin remodeling as part of telomere maintenance. This is Zinc finger protein 827 (ZNF827) from Macaca fascicularis (Crab-eating macaque).